Consider the following 339-residue polypeptide: DNA-directed RNA polymerase subunit alpha (339 aa).

Residues 1–238 form an alpha N-terminal domain (alpha-NTD) region; it reads MVDPIVTKNW…EQLSIFINFD (238 aa). The tract at residues 250-339 is alpha C-terminal domain (alpha-CTD); the sequence is VEEQKLNENL…KAAPQGAPKV (90 aa).

Belongs to the RNA polymerase alpha chain family. As to quaternary structure, homodimer. The RNAP catalytic core consists of 2 alpha, 1 beta, 1 beta' and 1 omega subunit. When a sigma factor is associated with the core the holoenzyme is formed, which can initiate transcription.

The catalysed reaction is RNA(n) + a ribonucleoside 5'-triphosphate = RNA(n+1) + diphosphate. Functionally, DNA-dependent RNA polymerase catalyzes the transcription of DNA into RNA using the four ribonucleoside triphosphates as substrates. The polypeptide is DNA-directed RNA polymerase subunit alpha (Anaeromyxobacter dehalogenans (strain 2CP-C)).